Here is a 340-residue protein sequence, read N- to C-terminus: DNA-directed RNA polymerase subunit alpha (340 aa).

The interval 1–236 (MSVIQKNWQE…DQLQLFINFE (236 aa)) is alpha N-terminal domain (alpha-NTD). Positions 252 to 340 (FNKNLLRKVD…DLAKKLEEPY (89 aa)) are alpha C-terminal domain (alpha-CTD).

The protein belongs to the RNA polymerase alpha chain family. In terms of assembly, homodimer. The RNAP catalytic core consists of 2 alpha, 1 beta, 1 beta' and 1 omega subunit. When a sigma factor is associated with the core the holoenzyme is formed, which can initiate transcription.

It catalyses the reaction RNA(n) + a ribonucleoside 5'-triphosphate = RNA(n+1) + diphosphate. DNA-dependent RNA polymerase catalyzes the transcription of DNA into RNA using the four ribonucleoside triphosphates as substrates. The chain is DNA-directed RNA polymerase subunit alpha from Rhodospirillum rubrum (strain ATCC 11170 / ATH 1.1.1 / DSM 467 / LMG 4362 / NCIMB 8255 / S1).